The sequence spans 147 residues: Protein-export protein SecB 2 (147 aa).

This sequence belongs to the SecB family. Homotetramer, a dimer of dimers. One homotetramer interacts with 1 SecA dimer.

The protein localises to the cytoplasm. One of the proteins required for the normal export of preproteins out of the cell cytoplasm. It is a molecular chaperone that binds to a subset of precursor proteins, maintaining them in a translocation-competent state. It also specifically binds to its receptor SecA. In Francisella tularensis subsp. holarctica (strain FTNF002-00 / FTA), this protein is Protein-export protein SecB 2.